The primary structure comprises 177 residues: Alkyl hydroperoxide reductase AhpD (177 aa).

Cys-131 acts as the Proton donor in catalysis. The cysteines at positions 131 and 134 are disulfide-linked. Cys-134 (cysteine sulfenic acid (-SOH) intermediate) is an active-site residue.

This sequence belongs to the AhpD family. Homotrimer.

The catalysed reaction is N(6)-[(R)-dihydrolipoyl]-L-lysyl-[lipoyl-carrier protein] + a hydroperoxide = N(6)-[(R)-lipoyl]-L-lysyl-[lipoyl-carrier protein] + an alcohol + H2O. Functionally, antioxidant protein with alkyl hydroperoxidase activity. Required for the reduction of the AhpC active site cysteine residues and for the regeneration of the AhpC enzyme activity. This chain is Alkyl hydroperoxide reductase AhpD, found in Streptomyces avermitilis (strain ATCC 31267 / DSM 46492 / JCM 5070 / NBRC 14893 / NCIMB 12804 / NRRL 8165 / MA-4680).